The sequence spans 351 residues: 5-deoxyribose 1-phosphate isomerase (351 aa).

Residues 48–50, Arg-91, and Gln-198 each bind substrate; that span reads RGA. The Proton donor role is filled by Asp-239. A substrate-binding site is contributed by 249–250; the sequence is NK.

This sequence belongs to the EIF-2B alpha/beta/delta subunits family. DrdI subfamily.

The catalysed reaction is 5-deoxy-alpha-D-ribose 1-phosphate = 5-deoxy-D-ribulose 1-phosphate. Its pathway is carbohydrate degradation. In terms of biological role, catalyzes the isomerization of 5-deoxy-alpha-D-ribose 1-phosphate to 5-deoxy-D-ribulose 1-phosphate, as part of a 5-deoxyribose salvage pathway that recycles this toxic radical SAM enzyme by-product to mainstream metabolites. This is 5-deoxyribose 1-phosphate isomerase from Moorella thermoacetica (strain ATCC 39073 / JCM 9320).